Consider the following 996-residue polypeptide: NACHT, LRR and PYD domains-containing protein 9 (996 aa).

In terms of domain architecture, Pyrin spans 1 to 94 (MAESFFSDFG…WRKARNEIRQ (94 aa)). Residues 150–469 (PTVVLHGPEG…FYMFTRPKDP (320 aa)) enclose the NACHT domain. Position 156–163 (156–163 (GPEGIGKT)) interacts with ATP. 6 LRR repeats span residues 748–769 (KLNLLSLCENALKDDGVLVLCE), 777–798 (ALEALLLSHCCFSSAACDHLSQ), 805–825 (SLTFLDLGSNVLKDEGVTTLC), 834–855 (NLQELWLMNCYFTSVCCVDIAT), 862–883 (KLKTLKLGNNKIYDAGAKQLCK), and 891–914 (KLENLGLEACELSPASCEDLASAL).

It belongs to the NLRP family. As to quaternary structure, sensor component of NLRP9 inflammasomes. Inflammasomes are supramolecular complexes that assemble in the cytosol in response to pathogens, such as rotavirus, and play critical roles in innate immunity and inflammation. The core of NLRP9 inflammasomes consists of a signal sensor component (NLRP9), an adapter (ASC/PYCARD), which recruits an effector pro-inflammatory caspase (CASP1). Within the complex, NLRP9 and PYCARD interact via their respective DAPIN/pyrin domains. This interaction initiates speck formation (nucleation) which greatly enhances further addition of soluble PYCARD molecules to the speck in a prion-like polymerization process. Clustered PYCARD nucleates the formation of CASP1 filaments through the interaction of their respective CARD domains, acting as a platform for CASP1 polymerization. CASP1 filament formation increases local enzyme concentration, resulting in trans-autocleavage and activation. Active CASP1 then processes IL1B and IL18 precursors, leading to the release of mature cytokines in the extracellular milieu and inflammatory response. Interacts with DHX9 upon rotavirus infection; this interaction may trigger inflammasome activation and inflammatory response. As to expression, detected exclusively in testis and ovary, and at high level in the oocyte from antral follicles.

The protein resides in the cytoplasm. The protein localises to the inflammasome. As the sensor component of the NLRP9 inflammasome, plays a crucial role in innate immunity and inflammation. In response to pathogens, including rotavirus, initiates the formation of the inflammasome polymeric complex, made of NLRP9, PYCARD and CASP1. Recruitment of proCASP1 to the inflammasome promotes its activation and CASP1-catalyzed IL1B and IL18 maturation and release in the extracellular milieu. The active cytokines stimulate inflammatory responses. Inflammasomes can also induce pyroptosis, an inflammatory form of programmed cell death. NLRP9 inflammasome activation may be initiated by DHX9 interaction with viral double-stranded RNA (dsRNA), preferentially to short dsRNA segments. The polypeptide is NACHT, LRR and PYD domains-containing protein 9 (NLRP9) (Bos taurus (Bovine)).